An 88-amino-acid chain; its full sequence is Small ribosomal subunit protein uS15 (88 aa).

Belongs to the universal ribosomal protein uS15 family. Part of the 30S ribosomal subunit. Forms a bridge to the 50S subunit in the 70S ribosome, contacting the 23S rRNA.

One of the primary rRNA binding proteins, it binds directly to 16S rRNA where it helps nucleate assembly of the platform of the 30S subunit by binding and bridging several RNA helices of the 16S rRNA. Its function is as follows. Forms an intersubunit bridge (bridge B4) with the 23S rRNA of the 50S subunit in the ribosome. The protein is Small ribosomal subunit protein uS15 of Psychrobacter cryohalolentis (strain ATCC BAA-1226 / DSM 17306 / VKM B-2378 / K5).